The sequence spans 322 residues: Undecaprenyl-phosphate 4-deoxy-4-formamido-L-arabinose transferase (322 aa).

Topologically, residues Met-1–Met-235 are cytoplasmic. A helical transmembrane segment spans residues Leu-236–Ile-256. Topologically, residues Leu-257 to Gly-269 are periplasmic. A helical transmembrane segment spans residues Val-270–Leu-290. The Cytoplasmic portion of the chain corresponds to Leu-291–Glu-322.

The protein belongs to the glycosyltransferase 2 family.

Its subcellular location is the cell inner membrane. It carries out the reaction UDP-4-deoxy-4-formamido-beta-L-arabinose + di-trans,octa-cis-undecaprenyl phosphate = 4-deoxy-4-formamido-alpha-L-arabinopyranosyl di-trans,octa-cis-undecaprenyl phosphate + UDP. It functions in the pathway glycolipid biosynthesis; 4-amino-4-deoxy-alpha-L-arabinose undecaprenyl phosphate biosynthesis; 4-amino-4-deoxy-alpha-L-arabinose undecaprenyl phosphate from UDP-4-deoxy-4-formamido-beta-L-arabinose and undecaprenyl phosphate: step 1/2. It participates in bacterial outer membrane biogenesis; lipopolysaccharide biosynthesis. In terms of biological role, catalyzes the transfer of 4-deoxy-4-formamido-L-arabinose from UDP to undecaprenyl phosphate. The modified arabinose is attached to lipid A and is required for resistance to polymyxin and cationic antimicrobial peptides. The chain is Undecaprenyl-phosphate 4-deoxy-4-formamido-L-arabinose transferase from Escherichia coli O17:K52:H18 (strain UMN026 / ExPEC).